A 333-amino-acid polypeptide reads, in one-letter code: PRKC apoptosis WT1 regulator protein (333 aa).

Composition is skewed to low complexity over residues 1 to 14, 33 to 51, 66 to 80, and 105 to 116; these read MATG…STTT, PAGP…PAGS, GPAG…APGA, and PSAAAASGAPGS. The interval 1 to 262 is disordered; sequence MATGGYRSGG…ASFSSSSTLE (262 aa). The short motif at 62 to 66 is the B30.2/SPRY domain-binding motif element; sequence ELNHG. The Nuclear localization signal signature appears at 138–154; the sequence is RKGKGQIEKRKLREKRR. The tract at residues 138–196 is selective for apoptosis induction in cancer cells (SAC); the sequence is RKGKGQIEKRKLREKRRSTGVVNIPAAECLDEYEDDEAGQKERKREDAITQQNTIQNEA. The residue at position 156 (Thr156) is a Phosphothreonine; by PKA. The segment covering 175-185 has biased composition (basic and acidic residues); sequence AGQKERKREDA. A compositionally biased stretch (polar residues) spans 186–196; the sequence is ITQQNTIQNEA. Ser224 bears the Phosphoserine mark. The segment covering 235–248 has biased composition (basic and acidic residues); the sequence is PRTDRSGFSRHNRD. Residues 255 to 333 adopt a coiled-coil conformation; the sequence is FSSSSTLEKR…LLKVVGQLTR (79 aa). The interval 293 to 333 is leucine-zipper; the sequence is IGKLKEEIDLLNRDLDDMEDENEQLKQENKTLLKVVGQLTR.

As to quaternary structure, homooligomer. Interacts (via the C-terminal region) with WT1. Interacts with THAP1. Interacts with AATF. Interacts with BACE1. Interacts with SPSB1 (via B30.2/SPRY domain); this interaction is direct and occurs in association with the Elongin BC complex. Interacts with SPSB2 (via B30.2/SPRY domain); this interaction occurs in association with the Elongin BC complex. Interacts with SPSB4 (via B30.2/SPRY domain); this interaction occurs in association with the Elongin BC complex. Component of a ternary complex composed of SQSTM1 and PRKCZ. Interacts with actin. In terms of processing, preferentially phosphorylated at the Thr-156 by PKC in cancer cells.

It localises to the cytoplasm. The protein localises to the nucleus. Functionally, pro-apoptotic protein capable of selectively inducing apoptosis in cancer cells, sensitizing the cells to diverse apoptotic stimuli and causing regression of tumors in animal models. Induces apoptosis in certain cancer cells by activation of the Fas prodeath pathway and coparallel inhibition of NF-kappa-B transcriptional activity. Inhibits the transcriptional activation and augments the transcriptional repression mediated by WT1. Down-regulates the anti-apoptotic protein BCL2 via its interaction with WT1. Also seems to be a transcriptional repressor by itself. May be directly involved in regulating the amyloid precursor protein (APP) cleavage activity of BACE1. The protein is PRKC apoptosis WT1 regulator protein (Pawr) of Mus musculus (Mouse).